The primary structure comprises 230 residues: UPF0173 metal-dependent hydrolase MK1542 (230 aa).

Belongs to the UPF0173 family.

The chain is UPF0173 metal-dependent hydrolase MK1542 from Methanopyrus kandleri (strain AV19 / DSM 6324 / JCM 9639 / NBRC 100938).